The sequence spans 305 residues: Phosphoinositol dihydroceramide synthase (305 aa).

The N-terminal stretch at 1–23 (MPSKKETLTVIVIMALFLLLTAA) is a signal peptide. Residue cysteine 24 is the site of N-palmitoyl cysteine attachment. Residue cysteine 24 is the site of S-diacylglycerol cysteine attachment. Transmembrane regions (helical) follow at residues 41–61 (LFFAGLPTRKLAVALLPFAIF), 117–137 (VFAGIFYLCWVPVPILFGLCL), 149–169 (FALVFLFVNLIGFAGYYIHPA), 216–236 (FAAVPSLHAAYMVVALVYAII), 241–261 (WYVIALFSVIMAGIWGTAIYS), and 266–286 (IIDVLLGISCALLGWLFFEYG).

Its subcellular location is the membrane. The enzyme catalyses N-(2-hydroxy-fatty acyl)-dihydroceramide + a 1,2-diacyl-sn-glycero-3-phospho-(1D-myo-inositol) = inositol-1-phospho-N-(2-hydroxy-fatty acyl)-dihydroceramide + a 1,2-diacyl-sn-glycerol. Catalyzes the addition of a phosphorylinositol group onto dihydroceramide to form phosphoinositol dihydroceramide (PI-DHC), an essential step in sphingolipid biosynthesis. The sequence is that of Phosphoinositol dihydroceramide synthase from Bacteroides thetaiotaomicron (strain ATCC 29148 / DSM 2079 / JCM 5827 / CCUG 10774 / NCTC 10582 / VPI-5482 / E50).